The following is a 396-amino-acid chain: Tryptophan synthase beta chain (396 aa).

At K88 the chain carries N6-(pyridoxal phosphate)lysine.

Belongs to the TrpB family. Tetramer of two alpha and two beta chains. It depends on pyridoxal 5'-phosphate as a cofactor.

It catalyses the reaction (1S,2R)-1-C-(indol-3-yl)glycerol 3-phosphate + L-serine = D-glyceraldehyde 3-phosphate + L-tryptophan + H2O. It participates in amino-acid biosynthesis; L-tryptophan biosynthesis; L-tryptophan from chorismate: step 5/5. Its function is as follows. The beta subunit is responsible for the synthesis of L-tryptophan from indole and L-serine. This is Tryptophan synthase beta chain from Shewanella sp. (strain ANA-3).